We begin with the raw amino-acid sequence, 182 residues long: Heat shock protein beta-2 (182 aa).

The sHSP domain occupies 55-163; sequence RAGEGGRAGA…DTEVNEVYIS (109 aa).

Belongs to the small heat shock protein (HSP20) family. Interacts with DMPK; may enhance its kinase activity.

It localises to the cytoplasm. The protein localises to the nucleus. Its function is as follows. May regulate the kinase DMPK. The protein is Heat shock protein beta-2 (Hspb2) of Rattus norvegicus (Rat).